The primary structure comprises 101 residues: NAD(P)H-quinone oxidoreductase subunit 4L, chloroplastic (101 aa).

A run of 3 helical transmembrane segments spans residues 2–22, 32–52, and 61–81; these read MLEH…YGLI, MCLE…SDFF, and IFSI…SAIV.

The protein belongs to the complex I subunit 4L family. NDH is composed of at least 16 different subunits, 5 of which are encoded in the nucleus.

The protein localises to the plastid. The protein resides in the chloroplast thylakoid membrane. The enzyme catalyses a plastoquinone + NADH + (n+1) H(+)(in) = a plastoquinol + NAD(+) + n H(+)(out). The catalysed reaction is a plastoquinone + NADPH + (n+1) H(+)(in) = a plastoquinol + NADP(+) + n H(+)(out). In terms of biological role, NDH shuttles electrons from NAD(P)H:plastoquinone, via FMN and iron-sulfur (Fe-S) centers, to quinones in the photosynthetic chain and possibly in a chloroplast respiratory chain. The immediate electron acceptor for the enzyme in this species is believed to be plastoquinone. Couples the redox reaction to proton translocation, and thus conserves the redox energy in a proton gradient. The polypeptide is NAD(P)H-quinone oxidoreductase subunit 4L, chloroplastic (Gossypium hirsutum (Upland cotton)).